Reading from the N-terminus, the 115-residue chain is Insulin-like peptide IlO1_i1 (115 aa).

The N-terminal stretch at 1–20 (MFVYTTIMLLLLAEINHSQG) is a signal peptide. 3 disulfide bridges follow: cysteine 40–cysteine 101, cysteine 52–cysteine 114, and cysteine 100–cysteine 105. A propeptide spans 59–93 (RRNRITGLDQRSIFESNLLAKRFLISRRQIVNNRR) (c peptide).

This sequence belongs to the insulin family. In terms of tissue distribution, expressed in tentacles.

It localises to the secreted. Heterodimer with unknown function. Surprisingly, the truncated synthetic analog (dimer of 27-58 and 94-115) does not bind to long insulin receptor (HIR-B) and insulin-like growth factor 1 receptor. This truncated synthetic analog shows very weak inhibitory activity on different voltage-gated channels. The sequence is that of Insulin-like peptide IlO1_i1 from Oulactis sp. (Sea anemone).